The chain runs to 511 residues: V-type proton ATPase subunit B, brain isoform (511 aa).

Arginine 400 is a binding site for ATP.

Belongs to the ATPase alpha/beta chains family. As to quaternary structure, V-ATPase is a heteromultimeric enzyme made up of two complexes: the ATP-hydrolytic V1 complex and the proton translocation V0 complex. The V1 complex consists of three catalytic AB heterodimers that form a heterohexamer, three peripheral stalks each consisting of EG heterodimers, one central rotor including subunits D and F, and the regulatory subunits C and H. The proton translocation complex V0 consists of the proton transport subunit a, a ring of proteolipid subunits c9c'', rotary subunit d, subunits e and f, and the accessory subunits ATP6AP1/Ac45 and ATP6AP2/PRR. In terms of tissue distribution, kidney; found in early distal nephron, encompassing thick ascending limbs and distal convoluted tubules and in the alpha-intercalated cells of the cortical collecting ducts (at protein level). Expressed in epididymal clear cells (at protein level). Mainly expressed in the organ of Corti and spiral ganglion neurons, in both the early postnatal cochlea (P2) and the adult cochlea (P30).

It is found in the apical cell membrane. The protein resides in the melanosome. The protein localises to the cytoplasm. It localises to the cytoplasmic vesicle. Its subcellular location is the secretory vesicle. It is found in the synaptic vesicle membrane. The protein resides in the clathrin-coated vesicle membrane. Non-catalytic subunit of the V1 complex of vacuolar(H+)-ATPase (V-ATPase), a multisubunit enzyme composed of a peripheral complex (V1) that hydrolyzes ATP and a membrane integral complex (V0) that translocates protons. V-ATPase is responsible for acidifying and maintaining the pH of intracellular compartments and in some cell types, is targeted to the plasma membrane, where it is responsible for acidifying the extracellular environment. In renal intercalated cells, can partially compensate the lack of ATP6V1B1 and mediate secretion of protons (H+) into the urine under base-line conditions but not in conditions of acid load. This Mus musculus (Mouse) protein is V-type proton ATPase subunit B, brain isoform (Atp6v1b2).